The chain runs to 292 residues: Techylectin-5A (292 aa).

The first 23 residues, 1–23, serve as a signal peptide directing secretion; it reads MHNLRNILFVITLIGQKYGLTSS. The residue at position 24 (Q24) is a Pyrrolidone carboxylic acid. One can recognise a Fibrinogen C-terminal domain in the interval 63–286; sequence PIVSPDPTDC…QVEMKIRPVE (224 aa). C72 and C103 are joined by a disulfide. N-linked (GlcNAc...) asparagine glycosylation is found at N173, N198, and N214. D221, H225, and T227 together coordinate Ca(2+). Cysteines 229 and 242 form a disulfide.

As to quaternary structure, multimeric. PubMed:10468566 and PubMed:11707569 are in disagreement about the nature of the multimer, PubMed:10468566 finds hexamers and octamers, the results in PubMed:11707569 suggest tetramers. Strongly expressed in heart and intestine, weakly expressed in hepatopancreas. Not found in hemocytes, stomach, nervous tissue or skeletal muscle.

Its subcellular location is the secreted. In terms of biological role, lectin involved in innate immunity. Agglutinates all types of human erythrocytes, Gram-positive and Gram-negative bacteria. Has a stronger agglutinating activity towards Gram-negative bacteria than towards Gram-positive bacteria. Specifically recognizes acetyl group-containing substances on agglutinated cells. The hemagglutinating activity was inhibited by EDTA, acetyl group-containing mono- and disaccharides, N-acetyl derivatives of amino acids, other acetyl group-containing substances, propionamide and benzamide. Enhances the antimicrobial activity of big defensin against Gram-positive bacteria but not against Gram-negative bacteria. The protein is Techylectin-5A of Tachypleus tridentatus (Japanese horseshoe crab).